The primary structure comprises 238 residues: 1-(5-phosphoribosyl)-5-[(5-phosphoribosylamino)methylideneamino] imidazole-4-carboxamide isomerase (238 aa).

Aspartate 8 acts as the Proton acceptor in catalysis. Aspartate 130 serves as the catalytic Proton donor.

Belongs to the HisA/HisF family.

It localises to the cytoplasm. It catalyses the reaction 1-(5-phospho-beta-D-ribosyl)-5-[(5-phospho-beta-D-ribosylamino)methylideneamino]imidazole-4-carboxamide = 5-[(5-phospho-1-deoxy-D-ribulos-1-ylimino)methylamino]-1-(5-phospho-beta-D-ribosyl)imidazole-4-carboxamide. It functions in the pathway amino-acid biosynthesis; L-histidine biosynthesis; L-histidine from 5-phospho-alpha-D-ribose 1-diphosphate: step 4/9. The polypeptide is 1-(5-phosphoribosyl)-5-[(5-phosphoribosylamino)methylideneamino] imidazole-4-carboxamide isomerase (Methanococcus maripaludis (strain C6 / ATCC BAA-1332)).